Consider the following 158-residue polypeptide: NAD(P)H-quinone oxidoreductase subunit J, chloroplastic (158 aa).

Belongs to the complex I 30 kDa subunit family. In terms of assembly, NDH is composed of at least 16 different subunits, 5 of which are encoded in the nucleus.

It is found in the plastid. The protein resides in the chloroplast thylakoid membrane. It carries out the reaction a plastoquinone + NADH + (n+1) H(+)(in) = a plastoquinol + NAD(+) + n H(+)(out). It catalyses the reaction a plastoquinone + NADPH + (n+1) H(+)(in) = a plastoquinol + NADP(+) + n H(+)(out). Functionally, NDH shuttles electrons from NAD(P)H:plastoquinone, via FMN and iron-sulfur (Fe-S) centers, to quinones in the photosynthetic chain and possibly in a chloroplast respiratory chain. The immediate electron acceptor for the enzyme in this species is believed to be plastoquinone. Couples the redox reaction to proton translocation, and thus conserves the redox energy in a proton gradient. The polypeptide is NAD(P)H-quinone oxidoreductase subunit J, chloroplastic (Solanum tuberosum (Potato)).